A 1410-amino-acid polypeptide reads, in one-letter code: Pogo transposable element with ZNF domain (1410 aa).

A disordered region spans residues 238–291 (RSTVPQSQSQQTKSTPSTSTTPTATQPTSLGQLAVQSPGQSNQTTNPKLAPSFP). Positions 239-266 (STVPQSQSQQTKSTPSTSTTPTATQPTS) are enriched in low complexity. Residues 267 to 284 (LGQLAVQSPGQSNQTTNP) show a composition bias toward polar residues. Lys319 is covalently cross-linked (Glycyl lysine isopeptide (Lys-Gly) (interchain with G-Cter in SUMO2)). Residues 332–361 (QSPGPVVVSNNSSAHGSQRTSGPESSMKVT) form a disordered region. Residue Ser333 is modified to Phosphoserine. Over residues 345-361 (AHGSQRTSGPESSMKVT) the composition is skewed to polar residues. A Glycyl lysine isopeptide (Lys-Gly) (interchain with G-Cter in SUMO2) cross-link involves residue Lys359. Residue Ser363 is modified to Phosphoserine. The segment at 375–397 (KICPRCNAQFRVTEALRGHMCYC) adopts a C2H2-type 1; atypical zinc-finger fold. The tract at residues 409–456 (KSLDSEPSVPSAAKPPSPEKTAPVASTPSSTPIPALSPPTKVPEPNEN) is disordered. Residue Lys422 forms a Glycyl lysine isopeptide (Lys-Gly) (interchain with G-Cter in SUMO2) linkage. Ser425 is modified (phosphoserine). Thr439 bears the Phosphothreonine mark. Residue Ser445 is modified to Phosphoserine. A Glycyl lysine isopeptide (Lys-Gly) (interchain with G-Cter in SUMO2) cross-link involves residue Lys449. Phosphothreonine is present on Thr463. A Glycyl lysine isopeptide (Lys-Gly) (interchain with G-Cter in SUMO2) cross-link involves residue Lys489. 6 consecutive C2H2-type zinc fingers follow at residues 494 to 516 (FRCP…MKHH), 530 to 553 (TICQ…ENVH), 560 to 583 (TKCK…KDTH), 590 to 613 (YVCQ…RMIH), 619 to 641 (LLCP…YMRH), and 647 to 670 (YHCN…LQHH). Lys629 participates in a covalent cross-link: Glycyl lysine isopeptide (Lys-Gly) (interchain with G-Cter in SUMO2). A Glycyl lysine isopeptide (Lys-Gly) (interchain with G-Cter in SUMO2) cross-link involves residue Lys677. The interval 693–715 (SRGQPRTVPVSSNDTPPSALQEA) is disordered. Over residues 701-710 (PVSSNDTPPS) the composition is skewed to polar residues. The C2H2-type 8 zinc finger occupies 771–794 (VHCSLCRYSTCCSRAYANHMINNH). A Glycyl lysine isopeptide (Lys-Gly) (interchain with G-Cter in SUMO2) cross-link involves residue Lys801. The tract at residues 810–850 (VSGIKLACTSCTFVTSVGDAMAKHLVFNPSHRSSSILPRGL) is required for interaction with CBX5. The C2H2-type 9 zinc-finger motif lies at 815 to 840 (LACTSCTFVTSVGDAMAKHLVFNPSH). Ser856 carries the post-translational modification Phosphoserine. 2 disordered regions span residues 857–927 (RHGQ…PQAL) and 942–969 (VDDQ…GVGK). A compositionally biased stretch (basic and acidic residues) spans 860 to 870 (QTRDRVHDRNV). Lys883 participates in a covalent cross-link: Glycyl lysine isopeptide (Lys-Gly) (interchain with G-Cter in SUMO2). A compositionally biased stretch (low complexity) spans 892-915 (ATPAEPEELLTPLAPALPSPASTA). In terms of domain architecture, HTH CENPB-type spans 1015–1085 (GENLEGKYLS…MLRHHLTPHA (71 aa)). One can recognise a DDE-1 domain in the interval 1117 to 1323 (LPLSMIVAID…DCPELVQRSF (207 aa)). A Phosphoserine modification is found at Ser1338. Positions 1340-1360 (TRNADMQEELIASLEEQLKLS) form a coiled coil. Residues 1360-1400 (SGEHSESSTPRPRSSPEETIEPESLHQLFEGESETESFYGF) form a disordered region. A phosphoserine mark is found at Ser1364 and Ser1367. The residue at position 1368 (Thr1368) is a Phosphothreonine. Ser1373 and Ser1374 each carry phosphoserine. Thr1378 carries the phosphothreonine modification. The short motif at 1380-1404 (EPESLHQLFEGESETESFYGFEEAD) is the Integrase domain-binding motif (IBM) element. At Ser1392 the chain carries Phosphoserine; by CK2. Residue Thr1394 is modified to Phosphothreonine. Ser1396 carries the post-translational modification Phosphoserine; by CK2.

In terms of assembly, interacts with CBX1, CBX3, MAD2L2 and CHAMP1. Interacts with CBX5; POGZ competes with PXVXL motif-containing proteins such as INCENP and TRIM28 for interaction with CBX5. Interacts (via IBM motif) with PSIP1 isoform 1 (via IBD domain); phosphorylation increases its affinity for PSIP1. Interacts with HDGFL2. Phosphorylation increases its interaction with PSIP1.

Its subcellular location is the nucleus. It localises to the chromosome. The protein localises to the cytoplasm. Its function is as follows. Plays a role in mitotic cell cycle progression and is involved in kinetochore assembly and mitotic sister chromatid cohesion. Probably through its association with CBX5 plays a role in mitotic chromosome segregation by regulating aurora kinase B/AURKB activation and AURKB and CBX5 dissociation from chromosome arms. Promotes the repair of DNA double-strand breaks through the homologous recombination pathway. This Homo sapiens (Human) protein is Pogo transposable element with ZNF domain (POGZ).